A 592-amino-acid polypeptide reads, in one-letter code: Beta-fructofuranosidase, insoluble isoenzyme 1 (592 aa).

An N-terminal signal peptide occupies residues 1-39 (MGVTIRNRNYDHGSLPFLQSLLAILLVTTTTLHINGVEA). The propeptide occupies 40–48 (FHEIHYNLQ). D74 is an active-site residue. The N-linked (GlcNAc...) (complex) asparagine glycan is linked to N170. An N-linked (GlcNAc...) asparagine glycan is attached at N195. Residue N311 is glycosylated (N-linked (GlcNAc...) (complex) asparagine). N-linked (GlcNAc...) (high mannose) asparagine glycosylation occurs at N348. The N-linked (GlcNAc...) asparagine glycan is linked to N570.

It belongs to the glycosyl hydrolase 32 family. In terms of tissue distribution, in leaves and roots of young plants.

The protein resides in the secreted. Its subcellular location is the cell wall. The enzyme catalyses Hydrolysis of terminal non-reducing beta-D-fructofuranoside residues in beta-D-fructofuranosides.. May play an important role in phloem unloading and in stress response. This chain is Beta-fructofuranosidase, insoluble isoenzyme 1 (INV1), found in Daucus carota (Wild carrot).